The sequence spans 2539 residues: Zinc finger FYVE domain-containing protein 26 (2539 aa).

A phosphoserine mark is found at Ser297, Ser615, Ser619, and Ser703. 3 disordered regions span residues 594–637, 699–724, and 738–806; these read HLPE…SLGV, ISSR…GLQS, and WRHK…SLSA. A compositionally biased stretch (basic residues) spans 764–774; the sequence is PSLRRGRRTRR. The span at 787–805 shows a compositional bias: low complexity; it reads SLESTSSELSTSTSEGSLS. Ser800 carries the post-translational modification Phosphoserine. Positions 868-895 form a coiled coil; the sequence is MFMERYQEVIQELAQVEHKIENQNSDAG. The disordered stretch occupies residues 1267–1296; it reads DLPLSTPSSPRTTENPTLERKPYSSPRDSS. Positions 1271 to 1282 are enriched in polar residues; the sequence is STPSSPRTTENP. A phosphoserine mark is found at Ser1742, Ser1764, Ser1780, and Ser1782. A disordered region spans residues 1754–1808; that stretch reads ADPETLPRSPSAEFSPAAPPGISSIHSPSLRERSFPPTQPSQEFVPPATPPARHQ. The span at 1760–1769 shows a compositional bias: low complexity; the sequence is PRSPSAEFSP. The segment at 1812–1872 adopts an FYVE-type zinc-finger fold; sequence DETESICMVC…VCDQCYSYCN (61 aa). Positions 1818, 1821, 1835, 1838, 1843, 1846, 1864, and 1867 each coordinate Zn(2+).

As to quaternary structure, interacts with AP5Z1, AP5B1, AP5S1 and SPG11. Interacts with TTC19 and KIF13A. Strongest expression in the adrenal gland, bone marrow, adult brain, fetal brain, lung, placenta, prostate, skeletal muscle, testis, thymus, and retina. Intermediate levels are detected in other structures, including the spinal cord.

Its subcellular location is the cytoplasm. The protein localises to the cytoskeleton. The protein resides in the microtubule organizing center. It localises to the centrosome. It is found in the midbody. Its function is as follows. Phosphatidylinositol 3-phosphate-binding protein required for the abscission step in cytokinesis: recruited to the midbody during cytokinesis and acts as a regulator of abscission. May also be required for efficient homologous recombination DNA double-strand break repair. The chain is Zinc finger FYVE domain-containing protein 26 (ZFYVE26) from Homo sapiens (Human).